A 180-amino-acid chain; its full sequence is ATP synthase subunit delta (180 aa).

It belongs to the ATPase delta chain family. F-type ATPases have 2 components, F(1) - the catalytic core - and F(0) - the membrane proton channel. F(1) has five subunits: alpha(3), beta(3), gamma(1), delta(1), epsilon(1). F(0) has three main subunits: a(1), b(2) and c(10-14). The alpha and beta chains form an alternating ring which encloses part of the gamma chain. F(1) is attached to F(0) by a central stalk formed by the gamma and epsilon chains, while a peripheral stalk is formed by the delta and b chains.

It is found in the cell inner membrane. F(1)F(0) ATP synthase produces ATP from ADP in the presence of a proton or sodium gradient. F-type ATPases consist of two structural domains, F(1) containing the extramembraneous catalytic core and F(0) containing the membrane proton channel, linked together by a central stalk and a peripheral stalk. During catalysis, ATP synthesis in the catalytic domain of F(1) is coupled via a rotary mechanism of the central stalk subunits to proton translocation. Functionally, this protein is part of the stalk that links CF(0) to CF(1). It either transmits conformational changes from CF(0) to CF(1) or is implicated in proton conduction. The polypeptide is ATP synthase subunit delta (Citrifermentans bemidjiense (strain ATCC BAA-1014 / DSM 16622 / JCM 12645 / Bem) (Geobacter bemidjiensis)).